A 365-amino-acid chain; its full sequence is Aminomethyltransferase (365 aa).

Belongs to the GcvT family. In terms of assembly, the glycine cleavage system is composed of four proteins: P, T, L and H.

It catalyses the reaction N(6)-[(R)-S(8)-aminomethyldihydrolipoyl]-L-lysyl-[protein] + (6S)-5,6,7,8-tetrahydrofolate = N(6)-[(R)-dihydrolipoyl]-L-lysyl-[protein] + (6R)-5,10-methylene-5,6,7,8-tetrahydrofolate + NH4(+). In terms of biological role, the glycine cleavage system catalyzes the degradation of glycine. This chain is Aminomethyltransferase, found in Aeromonas salmonicida (strain A449).